Here is a 407-residue protein sequence, read N- to C-terminus: Large ribosomal subunit protein uL4y (407 aa).

The segment at proline 57–alanine 96 is disordered.

It belongs to the universal ribosomal protein uL4 family.

In Arabidopsis thaliana (Mouse-ear cress), this protein is Large ribosomal subunit protein uL4y (RPL4D).